Here is a 105-residue protein sequence, read N- to C-terminus: uncharacterized protein (105 aa).

Residues 1-27 (MQSPAMKRIKSSSHSRWDGSGSVNEMP) are disordered.

Its subcellular location is the mitochondrion. This is an uncharacterized protein from Arabidopsis thaliana (Mouse-ear cress).